The sequence spans 95 residues: Glutamine synthetase and cystathionine beta-lyase binding protein (95 aa).

As to quaternary structure, interacts with glutamine synthetase (TTHA1329) and cystathionine beta-lyase (TTHA1620), but proteins do not form a ternary complex.

Its function is as follows. Binds to glutamine synthetase and cystathionine beta-lyase. May be utilized for the efficient use of nitrogen in the global nitrogen regulation of T.thermophilus. In Thermus thermophilus (strain ATCC 27634 / DSM 579 / HB8), this protein is Glutamine synthetase and cystathionine beta-lyase binding protein.